The following is a 264-amino-acid chain: uncharacterized protein (264 aa).

Residues 7-27 (LTLGICLVLLIILIVGYVIMT) traverse the membrane as a helical segment.

The protein belongs to the staphylococcal tandem lipoprotein family.

It is found in the cell membrane. This is an uncharacterized protein from Staphylococcus aureus (strain MRSA252).